Consider the following 65-residue polypeptide: Disintegrin VLO4 (65 aa).

The region spanning 1–65 is the Disintegrin domain; it reads MNSGNPCCDP…PDCPRNPWKG (65 aa). 4 cysteine pairs are disulfide-bonded: C7-C30, C21-C27, C26-C51, and C39-C58. Positions 43–45 match the Cell attachment site motif; sequence RGD.

The protein belongs to the disintegrin family. Dimeric disintegrin subfamily. In terms of assembly, homodimer; disulfide-linked. In terms of tissue distribution, expressed by the venom gland.

Its subcellular location is the secreted. Its function is as follows. Poor inhibitor of platelet aggregation. The disintegrin inhibits the adhesion of cells expressing the RGD-dependent integrin alpha-5/beta-1 (ITGA5/ITGB1) to immobilized fibronectin. Inhibition on alpha-2b/beta-3 (ITGA2B/ITGB3) is low. The sequence is that of Disintegrin VLO4 from Macrovipera lebetina obtusa (Levant blunt-nosed viper).